Consider the following 164-residue polypeptide: Pathogenesis-related protein PRB1-2 (164 aa).

Residues 1-24 form the signal peptide; the sequence is MQTPKLAILLALAMAAAMVNLSQA. Residue Gln-25 is modified to Pyrrolidone carboxylic acid. Residues 34–152 enclose the SCP domain; that stretch reads PHNAARSAVG…NRGVFITCNY (119 aa). Intrachain disulfides connect Cys-68/Cys-140, Cys-113/Cys-119, and Cys-135/Cys-150.

Belongs to the CRISP family.

Its function is as follows. Probably involved in the defense reaction of plants against pathogens. This Hordeum vulgare (Barley) protein is Pathogenesis-related protein PRB1-2.